The chain runs to 78 residues: Major outer membrane lipoprotein Lpp (78 aa).

The first 20 residues, 1-20 (MNRTKLVLGAVILASTMLAG), serve as a signal peptide directing secretion. Cys-21 carries the N-palmitoyl cysteine lipid modification. Cys-21 is lipidated: S-diacylglycerol cysteine. Repeats lie at residues 24–34 (NAKIDQLSSDV) and 38–48 (NAKVDQLSNDV). Residues 27-75 (IDQLSSDVQTLNAKVDQLSNDVNAVRADVQAAKDDAARANQRLDNQAQA) adopt a coiled-coil conformation. Lys-78 bears the N6-murein peptidoglycan lysine mark.

The protein belongs to the Lpp family. In terms of assembly, homotrimer.

Its subcellular location is the cell outer membrane. It is found in the secreted. The protein resides in the cell wall. Functionally, a highly abundant outer membrane lipoprotein that controls the distance between the inner and outer membranes. The only protein known to be covalently linked to the peptidoglycan network (PGN). Also non-covalently binds the PGN. The link between the cell outer membrane and PGN contributes to maintenance of the structural and functional integrity of the cell envelope, and maintains the correct distance between the PGN and the outer membrane. This is Major outer membrane lipoprotein Lpp from Yersinia pestis.